We begin with the raw amino-acid sequence, 195 residues long: MSNIKLIVGLANPGDKYEQTRHNAGAWYVNELARVCGVSLVADSKYYGLTARATLYGKDVRLLIPTTFMNLSGKSVGALANFFRIAPDEILVAHDELDMPPGVAKFKLGGGHGGHNGLKDIIAKLANDKGFYRLRIGIGHPGDKSMVSNYVLGKAPQTEQRLIEEVIDEAVRATEVLFKEDMSKAMHRLHSYKAG.

Position 17 (Y17) interacts with tRNA. Catalysis depends on H22, which acts as the Proton acceptor. TRNA-binding residues include F68, N70, and N116.

Belongs to the PTH family. In terms of assembly, monomer.

It localises to the cytoplasm. It carries out the reaction an N-acyl-L-alpha-aminoacyl-tRNA + H2O = an N-acyl-L-amino acid + a tRNA + H(+). Hydrolyzes ribosome-free peptidyl-tRNAs (with 1 or more amino acids incorporated), which drop off the ribosome during protein synthesis, or as a result of ribosome stalling. Its function is as follows. Catalyzes the release of premature peptidyl moieties from peptidyl-tRNA molecules trapped in stalled 50S ribosomal subunits, and thus maintains levels of free tRNAs and 50S ribosomes. This chain is Peptidyl-tRNA hydrolase, found in Shewanella loihica (strain ATCC BAA-1088 / PV-4).